The chain runs to 256 residues: Undecaprenyl-diphosphatase 2 (256 aa).

8 helical membrane passes run 1 to 21 (MDIFNAIILGIIEGITEFLPI), 38 to 58 (ATATNQAFGVIIQLAAILAVL), 70 to 90 (LNLWIKVAIAFIPLGIIAFIF), 97 to 117 (LFNVPVVGVMFIVGGVIFLLL), 134 to 154 (VTYKQAIWIGIAQVFALIPGT), 175 to 195 (AEFSFLLGLPVLAAASGYDLL), 208 to 228 (ALAVGFVTSFIVAYFTIKLFI), and 236 to 256 (FVSFGIYRIVFGVILLTIAYV).

It belongs to the UppP family.

Its subcellular location is the cell inner membrane. The enzyme catalyses di-trans,octa-cis-undecaprenyl diphosphate + H2O = di-trans,octa-cis-undecaprenyl phosphate + phosphate + H(+). Catalyzes the dephosphorylation of undecaprenyl diphosphate (UPP). Confers resistance to bacitracin. The sequence is that of Undecaprenyl-diphosphatase 2 from Pseudoalteromonas translucida (strain TAC 125).